Reading from the N-terminus, the 447-residue chain is uncharacterized protein (447 aa).

Belongs to the class-II fumarase/aspartase family.

Its subcellular location is the cytoplasm. It localises to the nucleus. This is an uncharacterized protein from Schizosaccharomyces pombe (strain 972 / ATCC 24843) (Fission yeast).